Consider the following 263-residue polypeptide: Renal glandular kallikrein (263 aa).

The first 18 residues, 1–18, serve as a signal peptide directing secretion; it reads MWFLILFLALFLGGIDAA. Positions 19-24 are cleaved as a propeptide — activation peptide; the sequence is PPVQSR. A Peptidase S1 domain is found at 25–260; the sequence is IIGGFNCEKN…YRSWIKDVMA (236 aa). 5 disulfides stabilise this stretch: Cys-31-Cys-175, Cys-50-Cys-66, Cys-153-Cys-221, Cys-186-Cys-200, and Cys-211-Cys-236. The Charge relay system role is filled by His-65. N-linked (GlcNAc...) asparagine glycosylation occurs at Asn-102. The Charge relay system role is filled by Asp-121. Ser-215 (charge relay system) is an active-site residue.

Belongs to the peptidase S1 family. Kallikrein subfamily.

The catalysed reaction is Preferential cleavage of Arg-|-Xaa bonds in small molecule substrates. Highly selective action to release kallidin (lysyl-bradykinin) from kininogen involves hydrolysis of Met-|-Xaa or Leu-|-Xaa.. Its function is as follows. Glandular kallikreins cleave Met-Lys and Arg-Ser bonds in kininogen to release Lys-bradykinin. The chain is Renal glandular kallikrein from Mastomys natalensis (African soft-furred rat).